Consider the following 292-residue polypeptide: MTTETTTATATAKIPAPATPYQEDIARYWNNEARPVNLRLGDVDGLYHHHYGIGPVDRAALGDPEHSEYEKKVIAELHRLESAQAEFLMDHLGQAGPDDTLVDAGCGRGGSMVMAHRRFGSRVEGVTLSAAQADFGNRRARELRIDDHVRSRVCNMLDTPFDKGAVTASWNNESTMYVDLHDLFSEHSRFLKVGGRYVTITGCWNPRYGQPSKWVSQINAHFECNIHSRREYLRAMADNRLVPHTIVDLTPDTLPYWELRATSSLVTGIEKAFIESYRDGSFQYVLIAADRV.

It belongs to the geranyl diphosphate 2-C-methyltransferase family. Mg(2+) is required as a cofactor.

The enzyme catalyses (2E)-geranyl diphosphate + S-adenosyl-L-methionine = (E)-2-methylgeranyl diphosphate + S-adenosyl-L-homocysteine + H(+). In terms of biological role, catalyzes the SAM-dependent methylation of geranyl diphosphate (GPP) to yield (E)-2-methylgeranyl diphosphate (2-MeGPP). This chain is Geranyl diphosphate 2-C-methyltransferase, found in Streptomyces coelicolor (strain ATCC BAA-471 / A3(2) / M145).